The sequence spans 311 residues: MSRYTPSEFAHQIGTGLLSFPVTHFKSDLSFDEAAYRANLSWLFSHEAAGLFAAGGTGEFFSLTPAETDRVVRAAVAETGGRLPVIAPAGYGTAMAKEYCQAAEAAGADGILLLPPYLTEASADGVAAHVEQVCKSTRLGVIVYNRANQVLDENHLERLAERCPNLVGFKDGVGDLELMTRIYSRLGERFTYIGGLPTAETFAMPYLTMGVTTYSSAIFNFVPKFALDFYAAVRAADHAKAYAMLNDFVLPYIALRNRKRGYAVSIVKAGMKVIGRSAGPVRAPLTDLTEAELAELSALVARIADVQKLAA.

The protein belongs to the DapA family.

It carries out the reaction 5-dehydro-4-deoxy-D-glucarate + H(+) = 2,5-dioxopentanoate + CO2 + H2O. Its pathway is carbohydrate acid metabolism; D-glucarate degradation; 2,5-dioxopentanoate from D-glucarate: step 2/2. This is Probable 5-dehydro-4-deoxyglucarate dehydratase from Ralstonia nicotianae (strain ATCC BAA-1114 / GMI1000) (Ralstonia solanacearum).